Here is a 507-residue protein sequence, read N- to C-terminus: Blue light receptor lreB (507 aa).

Residues 170–234 (RVLNEMKDML…EEMNECITTT (65 aa)) form the PAS domain. Residues 463–488 (CTDCGTSDSPEWRKGPEGPKTLCNAC) form a GATA-type zinc finger.

Probable transcription factor involved in light regulation. Plays crucial roles in fungal growth and asexual development. Involved in conidiophore formation, sclerotium production, and conidial stress tolerance. Positively regulates the fungal pathogenicity towards maize and aflatoxin B1 production. This chain is Blue light receptor lreB, found in Aspergillus flavus.